The following is a 499-amino-acid chain: Alpha-amylase A type-3 (499 aa).

The signal sequence occupies residues 1 to 21; the sequence is MMVAWWSLFLYGLQVAAPALA. An intrachain disulfide couples Cys51 to Cys59. Trp104 contacts substrate. Asn142 serves as a coordination point for Ca(2+). Position 143 (His143) interacts with substrate. The cysteines at positions 171 and 185 are disulfide-linked. Ca(2+) is bound by residues Glu183 and Asp196. Asn218 carries an N-linked (GlcNAc...) asparagine glycan. Arg225 lines the substrate pocket. Residues Asp227, His231, and Glu251 each coordinate Ca(2+). Asp227 acts as the Nucleophile in catalysis. 230–231 provides a ligand contact to substrate; the sequence is KH. Glu251 serves as the catalytic Proton donor. Substrate is bound at residue Gly255. A disulfide bridge connects residues Cys261 and Cys304. Arg365 contacts substrate. Cys461 and Cys496 are oxidised to a cystine.

This sequence belongs to the glycosyl hydrolase 13 family. Monomer. It depends on Ca(2+) as a cofactor.

The protein resides in the secreted. It catalyses the reaction Endohydrolysis of (1-&gt;4)-alpha-D-glucosidic linkages in polysaccharides containing three or more (1-&gt;4)-alpha-linked D-glucose units.. This chain is Alpha-amylase A type-3 (amy3), found in Aspergillus oryzae (strain ATCC 42149 / RIB 40) (Yellow koji mold).